Here is a 423-residue protein sequence, read N- to C-terminus: Imidazolonepropionase (423 aa).

The Fe(3+) site is built by H87 and H89. Residues H87 and H89 each contribute to the Zn(2+) site. The 4-imidazolone-5-propanoate site is built by R96, Y159, and H192. Y159 provides a ligand contact to N-formimidoyl-L-glutamate. H257 contacts Fe(3+). H257 is a Zn(2+) binding site. E260 contributes to the 4-imidazolone-5-propanoate binding site. D331 lines the Fe(3+) pocket. D331 serves as a coordination point for Zn(2+). Residues N333 and G335 each contribute to the N-formimidoyl-L-glutamate site. S336 contributes to the 4-imidazolone-5-propanoate binding site.

It belongs to the metallo-dependent hydrolases superfamily. HutI family. The cofactor is Zn(2+). Fe(3+) is required as a cofactor.

It is found in the cytoplasm. It catalyses the reaction 4-imidazolone-5-propanoate + H2O = N-formimidoyl-L-glutamate. The protein operates within amino-acid degradation; L-histidine degradation into L-glutamate; N-formimidoyl-L-glutamate from L-histidine: step 3/3. Its function is as follows. Catalyzes the hydrolytic cleavage of the carbon-nitrogen bond in imidazolone-5-propanoate to yield N-formimidoyl-L-glutamate. It is the third step in the universal histidine degradation pathway. The polypeptide is Imidazolonepropionase (Porphyromonas gingivalis (strain ATCC 33277 / DSM 20709 / CIP 103683 / JCM 12257 / NCTC 11834 / 2561)).